A 1685-amino-acid chain; its full sequence is Myomesin-1 (1685 aa).

The disordered stretch occupies residues 33 to 80 (KKRSAVYTQGSTAYSSRSSAAHRRESEAFRRASASSSQQQASQHALSS). 2 stretches are compositionally biased toward low complexity: residues 41-51 (QGSTAYSSRSS) and 63-80 (RASASSSQQQASQHALSS). Residue S113 is modified to Phosphoserine. The segment at 177–244 (GITTSKQSTA…TSEKKSRKVV (68 aa)) is disordered. The span at 179-220 (TTSKQSTASKQTTASKQSTASKQSTASKQSTASRQSTASRQS) shows a compositional bias: low complexity. A run of 6 repeats spans residues 182–187 (KQSTAS), 188–193 (KQTTAS), 194–199 (KQSTAS), 200–205 (KQSTAS), 206–211 (KQSTAS), and 212–217 (RQSTAS). The interval 182 to 217 (KQSTASKQTTASKQSTASKQSTASKQSTASRQSTAS) is 6 X 6 AA tandem repeats. Polar residues predominate over residues 221–233 (VVSKQATSALQQE). Ig-like C2-type domains are found at residues 277-368 (PEFI…ASVV) and 396-498 (PYGY…AYVF). Fibronectin type-III domains lie at 512 to 607 (APLD…ALDP), 640 to 734 (PPTD…VVGD), and 741 to 834 (APGK…VKAA). The interval 840–938 (SPDVCPALSD…TDRAPPSPPC (99 aa)) is disordered. Residues 874–888 (LLGSKPNKPSLPSSS) are compositionally biased toward low complexity. A phosphoserine mark is found at S883 and S887. A compositionally biased stretch (polar residues) spans 889–902 (QNLGQTEVSKVSET). Over residues 920–931 (SKSDPLKKKTDR) the composition is skewed to basic and acidic residues. Fibronectin type-III domains are found at residues 933–1034 (PPSP…CEEW) and 1041–1140 (PPHS…TRPG). Phosphoserine is present on S1054. Ig-like C2-type domains lie at 1132–1230 (PVVA…EELK), 1358–1444 (PHFV…LKLV), and 1573–1662 (RVLG…FTVS). An intrachain disulfide couples C1160 to C1210.

As to quaternary structure, homodimer. Interacts with TTN/titin. Interacts with PNKD.

The protein resides in the cytoplasm. It is found in the myofibril. The protein localises to the sarcomere. It localises to the m line. Functionally, major component of the vertebrate myofibrillar M band. Binds myosin, titin, and light meromyosin. This binding is dose dependent. In Homo sapiens (Human), this protein is Myomesin-1 (MYOM1).